We begin with the raw amino-acid sequence, 132 residues long: Large ribosomal subunit protein bL17 (132 aa).

It belongs to the bacterial ribosomal protein bL17 family. As to quaternary structure, part of the 50S ribosomal subunit. Contacts protein L32.

The polypeptide is Large ribosomal subunit protein bL17 (Marinobacter nauticus (strain ATCC 700491 / DSM 11845 / VT8) (Marinobacter aquaeolei)).